The primary structure comprises 324 residues: Sex-lethal homolog (324 aa).

2 consecutive RRM domains span residues 102 to 180 (TNLI…YARP) and 188 to 268 (TNLY…LAEE).

In terms of tissue distribution, expressed in somatic cells of both sexes throughout development, but not in the pole cells which are the progenitors of the germline.

The protein localises to the nucleus. Unknown; apparently not involved in somatic sex determination. This is Sex-lethal homolog (SXL) from Musca domestica (House fly).